A 217-amino-acid polypeptide reads, in one-letter code: Lipid transferase CIDEA (217 aa).

Residues 33-110 (PARPFRVSNH…ILEKGQKWTP (78 aa)) form the CIDE-N domain. The interval 163–180 (CTSFKAVLRNLLRFMSYA) is amphipathic helix.

It belongs to the CIDE family. As to quaternary structure, homodimer. Interacts with CIDEC. Directly interacts with CEBPB. Interacts with isoform CLSTN3beta of CLSTN3; inhibiting the lipid transferase activity of CIDEA. Highly expressed in brown adipose tissue and, at lower levels, in white adipose tissue (at protein level). Undetectable in undifferentiated preadipocytes. Expressed in mammary gland during pregnancy and lactation, in epithelial cells, but not in the surrounding adipose tissue. Secreted into milk via milk fat globules.

It localises to the lipid droplet. It is found in the nucleus. The catalysed reaction is a triacyl-sn-glycerol(in) = a triacyl-sn-glycerol(out). Lipid transferase that promotes unilocular lipid droplet formation by mediating lipid droplet fusion. Lipid droplet fusion promotes their enlargement, restricting lipolysis and favoring lipid storage. Localizes on the lipid droplet surface, at focal contact sites between lipid droplets, and mediates atypical lipid droplet fusion by promoting directional net neutral lipid transfer from the smaller to larger lipid droplets. The transfer direction may be driven by the internal pressure difference between the contacting lipid droplet pair and occurs at a lower rate than that promoted by CIDEC. May also act as a CEBPB coactivator in epithelial cells to control the expression of a subset of CEBPB downstream target genes, including ID2, IGF1, PRLR, SOCS1, SOCS3, XDH, but not casein. By interacting with CEBPB, strengthens the association of CEBPB with the XDH promoter, increases histone acetylation and dissociates HDAC1 from the promoter. When overexpressed, induces apoptosis; the physiological significance of its role in apoptosis is unclear. This Mus musculus (Mouse) protein is Lipid transferase CIDEA.